A 296-amino-acid chain; its full sequence is Non-selective voltage-gated ion channel VDAC2 (296 aa).

An ATP-binding site is contributed by Lys-25. Lys-25 participates in a covalent cross-link: Glycyl lysine isopeptide (Lys-Gly) (interchain with G-Cter in ubiquitin). Ser-26 carries the phosphoserine modification. Lys-33 contacts ATP. At Lys-33 the chain carries N6-acetyllysine; alternate. Lys-33 is modified (N6-succinyllysine; alternate). Residue Lys-33 forms a Glycyl lysine isopeptide (Lys-Gly) (interchain with G-Cter in ubiquitin); alternate linkage. The next 2 beta stranded transmembrane spans lie at 39 to 48 and 52 to 60; these read LVKLDVKTKS and VEFTTSGSS. Residues Lys-66 and Lys-74 each participate in a glycyl lysine isopeptide (Lys-Gly) (interchain with G-Cter in ubiquitin) cross-link. Residues 67–77 form a beta stranded membrane-spanning segment; that stretch reads VNGSLETKYKW. Tyr-80 carries the post-translational modification Phosphotyrosine. The next 3 membrane-spanning stretches (beta stranded) occupy residues 82–89, 93–102, and 108–117; these read LTFTEKWN, TLGTEIAIED, and LKLTFDTTFS. The residue at position 120 (Thr-120) is a Phosphothreonine. Lys-122 carries the N6-acetyllysine; alternate modification. Residue Lys-122 forms a Glycyl lysine isopeptide (Lys-Gly) (interchain with G-Cter in ubiquitin); alternate linkage. Lys-123 participates in a covalent cross-link: Glycyl lysine isopeptide (Lys-Gly) (interchain with G-Cter in ubiquitin). 4 consecutive transmembrane segments (beta stranded) span residues 124–133, 136–143, 150–158, and 163–171; these read SGKIKSAYKR, LNLGCDVD, AIHGSAVFG, and LAGYQMTFD. A Glycyl lysine isopeptide (Lys-Gly) (interchain with G-Cter in ubiquitin) cross-link involves residue Lys-174. A run of 6 beta stranded transmembrane segments spans residues 176–188, 191–198, 202–211, 215–224, 231–240, and 244–251; these read KLTR…GYKT, FQLHTNVN, EFGGSIYQKV, LETAVNLAWT, RFGIAAKYKL, and ASISAKVN. Position 206 is a phosphoserine (Ser-206). Ser-253 bears the Phosphoserine mark. Residues 255-257 and 273-277 contribute to the NAD(+) site; these read LVG and SALID. The next 2 membrane-spanning stretches (beta stranded) occupy residues 255–264 and 267–276; these read LVGVGYTQTL and GVKLTLSALI. Lys-279 carries the N6-acetyllysine; alternate modification. Lys-279 is covalently cross-linked (Glycyl lysine isopeptide (Lys-Gly) (interchain with G-Cter in ubiquitin); alternate). Residues 286–295 form a beta stranded membrane-spanning segment; that stretch reads HKLGLGLELE. Lys-287 participates in a covalent cross-link: Glycyl lysine isopeptide (Lys-Gly) (interchain with G-Cter in ubiquitin).

This sequence belongs to the eukaryotic mitochondrial porin family. Monomer, homodimer and higher order oligomers; formation of higher order structures is necessary for scramblase activity. Ubiquitinated by PRKN during mitophagy, leading to its degradation and enhancement of mitophagy. Deubiquitinated by USP30.

The protein localises to the mitochondrion outer membrane. It is found in the membrane. It catalyses the reaction chloride(in) = chloride(out). The catalysed reaction is K(+)(in) = K(+)(out). The enzyme catalyses a 1,2-diacyl-sn-glycero-3-phospho-L-serine(in) = a 1,2-diacyl-sn-glycero-3-phospho-L-serine(out). It carries out the reaction a 1,2-diacyl-sn-glycero-3-phosphocholine(in) = a 1,2-diacyl-sn-glycero-3-phosphocholine(out). It catalyses the reaction a 1,2-diacyl-sn-glycero-3-phospho-(1D-myo-inositol)(in) = a 1,2-diacyl-sn-glycero-3-phospho-(1D-myo-inositol)(out). Non-selective voltage-gated ion channel that mediates the transport of anions and cations through the mitochondrion outer membrane and plasma membrane. The channel adopts an open conformation at zero mV and a closed conformation at both positive and negative potentials. There are two populations of channels; the main that functions in a lower open-state conductance with lower ion selectivity, that switch, in a voltage-dependent manner, from the open to a low-conducting 'closed' state and the other that has a normal ion selectivity in the typical high conductance, 'open' state. Binds various lipids, including the sphingolipid ceramide, the phospholipid phosphatidylcholine, and the sterols cholesterol and oxysterol. Binding of ceramide promotes the mitochondrial outer membrane permeabilization (MOMP) apoptotic pathway. Functionally, catalyzes the scrambling of phospholipids across the outer mitochondrial membrane; the mechanism is unrelated to channel activity and is capable of translocating both anionic and zwitterionic phospholipids. The protein is Non-selective voltage-gated ion channel VDAC2 of Meleagris gallopavo (Wild turkey).